The sequence spans 274 residues: Dermonecrotic toxin SdSicTox-betaIIB1bi (274 aa).

Residue His-5 is part of the active site. Residues Glu-25 and Asp-27 each coordinate Mg(2+). The active-site Nucleophile is the His-41. 2 cysteine pairs are disulfide-bonded: Cys-45–Cys-51 and Cys-47–Cys-190. Asp-85 provides a ligand contact to Mg(2+).

The protein belongs to the arthropod phospholipase D family. Class II subfamily. Requires Mg(2+) as cofactor. In terms of tissue distribution, expressed by the venom gland.

It localises to the secreted. It carries out the reaction an N-(acyl)-sphingosylphosphocholine = an N-(acyl)-sphingosyl-1,3-cyclic phosphate + choline. It catalyses the reaction an N-(acyl)-sphingosylphosphoethanolamine = an N-(acyl)-sphingosyl-1,3-cyclic phosphate + ethanolamine. The enzyme catalyses a 1-acyl-sn-glycero-3-phosphocholine = a 1-acyl-sn-glycero-2,3-cyclic phosphate + choline. The catalysed reaction is a 1-acyl-sn-glycero-3-phosphoethanolamine = a 1-acyl-sn-glycero-2,3-cyclic phosphate + ethanolamine. Functionally, dermonecrotic toxins cleave the phosphodiester linkage between the phosphate and headgroup of certain phospholipids (sphingolipid and lysolipid substrates), forming an alcohol (often choline) and a cyclic phosphate. This toxin acts on sphingomyelin (SM). It may also act on ceramide phosphoethanolamine (CPE), lysophosphatidylcholine (LPC) and lysophosphatidylethanolamine (LPE), but not on lysophosphatidylserine (LPS), and lysophosphatidylglycerol (LPG). It acts by transphosphatidylation, releasing exclusively cyclic phosphate products as second products. Induces dermonecrosis, hemolysis, increased vascular permeability, edema, inflammatory response, and platelet aggregation. The protein is Dermonecrotic toxin SdSicTox-betaIIB1bi of Sicarius cf. damarensis (strain GJB-2008) (Six-eyed sand spider).